A 485-amino-acid polypeptide reads, in one-letter code: Adenosylhomocysteinase (485 aa).

Residues Thr-64, Asp-139, and Glu-205 each contribute to the substrate site. An NAD(+)-binding site is contributed by 206-208 (TTT). Residues Lys-235 and Asp-239 each coordinate substrate. Residues Asn-240, 269–274 (GYGDVG), Glu-292, Asn-327, 348–350 (IGH), and Asn-397 each bind NAD(+).

It belongs to the adenosylhomocysteinase family. As to quaternary structure, homotetramer. Requires NAD(+) as cofactor. Mainly in floral buds and stems.

It catalyses the reaction S-adenosyl-L-homocysteine + H2O = L-homocysteine + adenosine. It participates in amino-acid biosynthesis; L-homocysteine biosynthesis; L-homocysteine from S-adenosyl-L-homocysteine: step 1/1. Adenosylhomocysteine is a competitive inhibitor of S-adenosyl-L-methionine-dependent methyl transferase reactions; therefore adenosylhomocysteinase may play a key role in the control of methylations via regulation of the intracellular concentration of adenosylhomocysteine. The polypeptide is Adenosylhomocysteinase (SAHH) (Petroselinum crispum (Parsley)).